We begin with the raw amino-acid sequence, 146 residues long: Horcolin (146 aa).

The tract at residues 1–21 (MSKPVKIGPWGGNGGSERDVQ) is disordered. The Jacalin-type lectin domain occupies 4 to 146 (PVKIGPWGGN…LDAIGFYITP (143 aa)).

This sequence belongs to the jacalin lectin family.

It localises to the secreted. The protein localises to the extracellular space. Its subcellular location is the apoplast. In terms of biological role, mannose-specific lectin. Has a weak agglutinating activity against rabbit erythrocytes. The chain is Horcolin from Hordeum vulgare (Barley).